Here is a 333-residue protein sequence, read N- to C-terminus: NADH-quinone oxidoreductase subunit H (333 aa).

8 helical membrane-spanning segments follow: residues 15–35 (FFIFFGLAVLLLFAVLGFVTY), 88–108 (FILAPVIAFAPAFMVLAVIPF), 117–137 (IGVGLLYYIAVSGITTIGVVT), 159–179 (ISYEIPLVMSVIGIVLLAGSL), 191–211 (VWYIFVQPIGFVVFLIAAVAE), 239–259 (WAFFMLSEYVYFFGMASLITV), 274–296 (IPGAVWFALKFSSVVFLLIWFRV), and 313–333 (VLLPIALANIFLTALIKELFF).

It belongs to the complex I subunit 1 family. In terms of assembly, NDH-1 is composed of 14 different subunits. Subunits NuoA, H, J, K, L, M, N constitute the membrane sector of the complex.

The protein localises to the cell membrane. It carries out the reaction a quinone + NADH + 5 H(+)(in) = a quinol + NAD(+) + 4 H(+)(out). Its function is as follows. NDH-1 shuttles electrons from NADH, via FMN and iron-sulfur (Fe-S) centers, to quinones in the respiratory chain. The immediate electron acceptor for the enzyme in this species is believed to be ubiquinone. Couples the redox reaction to proton translocation (for every two electrons transferred, four hydrogen ions are translocated across the cytoplasmic membrane), and thus conserves the redox energy in a proton gradient. This subunit may bind ubiquinone. The polypeptide is NADH-quinone oxidoreductase subunit H (Bacillus cereus (strain G9842)).